Consider the following 405-residue polypeptide: Argininosuccinate synthase (405 aa).

Residue 11 to 19 (AYSGGLDTS) coordinates ATP. Residue tyrosine 90 coordinates L-citrulline. Glycine 119 contributes to the ATP binding site. The L-aspartate site is built by threonine 121, asparagine 125, and aspartate 126. Asparagine 125 is an L-citrulline binding site. The L-citrulline site is built by arginine 129, serine 178, serine 187, glutamate 263, and tyrosine 275.

It belongs to the argininosuccinate synthase family. Type 1 subfamily. As to quaternary structure, homotetramer.

The protein resides in the cytoplasm. It carries out the reaction L-citrulline + L-aspartate + ATP = 2-(N(omega)-L-arginino)succinate + AMP + diphosphate + H(+). The protein operates within amino-acid biosynthesis; L-arginine biosynthesis; L-arginine from L-ornithine and carbamoyl phosphate: step 2/3. This is Argininosuccinate synthase from Legionella pneumophila subsp. pneumophila (strain Philadelphia 1 / ATCC 33152 / DSM 7513).